Consider the following 175-residue polypeptide: MVSLKDSHFELFHLPAQFALDEPTLDAAYRAVQSQVHPDRFAAAGDAQKRVAMQWATRANEAYQTLRDPLKRATYLLHLRGVDVGAENNTAMEPAFLMQQMEWRERIEDAAAAKNVGELDALLDELRDERRARLAKLGSLLDSGSDQGAAEAVRQLMFVERVSAEIGAQIERLEH.

The J domain maps to 7 to 79; that stretch reads SHFELFHLPA…LKRATYLLHL (73 aa).

It belongs to the HscB family. Interacts with HscA and stimulates its ATPase activity.

In terms of biological role, co-chaperone involved in the maturation of iron-sulfur cluster-containing proteins. Seems to help targeting proteins to be folded toward HscA. This chain is Co-chaperone protein HscB homolog, found in Burkholderia thailandensis (strain ATCC 700388 / DSM 13276 / CCUG 48851 / CIP 106301 / E264).